The sequence spans 3291 residues: Protocadherin-16 (3291 aa).

A signal peptide spans 1–35 (MQEELSVALSCPGMKSLGTLLPLLVLLGTTVPGIR). The Extracellular segment spans residues 36–2933 (GQAGSLDLQI…PDLNLLLVGA (2898 aa)). 27 consecutive Cadherin domains span residues 37–137 (QAGS…APAF), 138–249 (PQAR…APAF), 250–356 (NQSR…QPSM), 369–466 (VSEA…APAF), 476–572 (LPEV…EPQF), 573–679 (QRTF…PPQF), 680–784 (YPRE…PPIF), 785–888 (EQLQ…SPAF), 889–994 (PAPE…APRF), 995–1105 (DSPT…EPTF), 1100–1205 (SEEP…SPTF), 1218–1317 (IQVP…SPDL), 1326–1429 (VPVV…APAF), 1430–1539 (ARDP…APVF), 1539–1642 (FASP…APAF), 1643–1744 (PQQE…SPTF), 1745–1848 (GNTH…APAF), 1849–1953 (PVPS…APAF), 1976–2061 (LATL…GPRF), 2062–2164 (PRAN…APRF), 2165–2270 (LQPH…RPTI), 2270–2369 (IPQP…VPIF), 2370–2475 (SQSL…APSF), 2476–2595 (TLPH…PPVF), 2596–2699 (TRAS…GPAF), 2700–2806 (PLSL…DPVF), and 2807–2926 (LAPS…APDL). N-linked (GlcNAc...) asparagine glycosylation is present at asparagine 396. Residues 951 to 971 (GPPGGPPHELEVEAQDGGSPP) form a disordered region. N-linked (GlcNAc...) asparagine glycosylation occurs at asparagine 1711. The N-linked (GlcNAc...) asparagine glycan is linked to asparagine 2354. N-linked (GlcNAc...) asparagine glycosylation occurs at asparagine 2562. The chain crosses the membrane as a helical span at residues 2934 to 2954 (VAASLGVVVVLALAALVLGLV). Residues 2955–3291 (RARSRKAEAA…EPPDDTELRI (337 aa)) are Cytoplasmic-facing. The segment at 2978–3033 (SLQKLGREPPSPPPSEHLYHQTLPSYGGPGAGGPYPRGGSLDPSHSSGRGSAEAAE) is disordered. Over residues 3004–3013 (GGPGAGGPYP) the composition is skewed to gly residues. A Phosphoserine modification is found at serine 3048. Disordered stretches follow at residues 3051–3080 (SSLA…PAPD) and 3226–3291 (ASHR…ELRI). The span at 3237–3259 (SLSSAAMSPSFSPSLSPLAARSP) shows a compositional bias: low complexity. Residues 3270–3279 (PSASALSTES) show a composition bias toward polar residues.

As to quaternary structure, heterophilic interaction with FAT4; this interaction affects their respective protein levels.

Its subcellular location is the cell membrane. Its function is as follows. Calcium-dependent cell-adhesion protein. Mediates functions in neuroprogenitor cell proliferation and differentiation. This is Protocadherin-16 (Dchs1) from Rattus norvegicus (Rat).